The sequence spans 473 residues: Trigger factor (473 aa).

In terms of domain architecture, PPIase FKBP-type spans 162–243 (GDFVSIDLSA…VKSIKVRELP (82 aa)). Residues 433–473 (TAEFFGPSGEQAEAEQDEAAPAEDATEETDADSDEAADDSK) form a disordered region. Acidic residues predominate over residues 444 to 473 (AEAEQDEAAPAEDATEETDADSDEAADDSK).

It belongs to the FKBP-type PPIase family. Tig subfamily.

Its subcellular location is the cytoplasm. The catalysed reaction is [protein]-peptidylproline (omega=180) = [protein]-peptidylproline (omega=0). Involved in protein export. Acts as a chaperone by maintaining the newly synthesized protein in an open conformation. Functions as a peptidyl-prolyl cis-trans isomerase. This chain is Trigger factor, found in Mycolicibacterium vanbaalenii (strain DSM 7251 / JCM 13017 / BCRC 16820 / KCTC 9966 / NRRL B-24157 / PYR-1) (Mycobacterium vanbaalenii).